The following is a 186-amino-acid chain: Probable RNA 2'-phosphotransferase (186 aa).

Belongs to the KptA/TPT1 family.

Functionally, removes the 2'-phosphate from RNA via an intermediate in which the phosphate is ADP-ribosylated by NAD followed by a presumed transesterification to release the RNA and generate ADP-ribose 1''-2''-cyclic phosphate (APPR&gt;P). May function as an ADP-ribosylase. The polypeptide is Probable RNA 2'-phosphotransferase (Hahella chejuensis (strain KCTC 2396)).